Here is a 1325-residue protein sequence, read N- to C-terminus: Cellulose synthase 1 operon protein C (1325 aa).

The N-terminal stretch at 1–30 (MNRRYVFSLSAGLLASSCMGAIMPVPVARA) is a signal peptide. TPR repeat units lie at residues 50–83 (RQIL…APDA), 85–117 (DVLE…APGS), 292–325 (AGLA…NSHD), 326–359 (ADSL…DPKT), 406–439 (TGAT…DPNN), 558–591 (NDAA…KEDL), 702–735 (MGIA…DPEA), and 737–769 (SPKL…NPQD). A disordered region spans residues 838–886 (VEGSRSASGPAATEEDALAPPSSNPFRHHGYGRQTELGAPVTGGSYSME).

This sequence belongs to the AcsC/BcsC family.

It is found in the cell outer membrane. Its pathway is glycan metabolism; bacterial cellulose biosynthesis. Required for maximal bacterial cellulose synthesis. It may be involved in the formation of a membrane complex for extrusion of the cellulose product. The chain is Cellulose synthase 1 operon protein C (bcsCI) from Komagataeibacter xylinus (Gluconacetobacter xylinus).